Consider the following 334-residue polypeptide: tRNA-dihydrouridine(20/20a) synthase (334 aa).

FMN-binding positions include 18 to 20 and Gln-71; that span reads PMM. The active-site Proton donor is the Cys-101. Residues Lys-140, His-172, 212–214, and 234–235 contribute to the FMN site; these read NGG and GR.

It belongs to the Dus family. DusA subfamily. It depends on FMN as a cofactor.

The enzyme catalyses 5,6-dihydrouridine(20) in tRNA + NADP(+) = uridine(20) in tRNA + NADPH + H(+). The catalysed reaction is 5,6-dihydrouridine(20) in tRNA + NAD(+) = uridine(20) in tRNA + NADH + H(+). It catalyses the reaction 5,6-dihydrouridine(20a) in tRNA + NADP(+) = uridine(20a) in tRNA + NADPH + H(+). It carries out the reaction 5,6-dihydrouridine(20a) in tRNA + NAD(+) = uridine(20a) in tRNA + NADH + H(+). Functionally, catalyzes the synthesis of 5,6-dihydrouridine (D), a modified base found in the D-loop of most tRNAs, via the reduction of the C5-C6 double bond in target uridines. Specifically modifies U20 and U20a in tRNAs. This chain is tRNA-dihydrouridine(20/20a) synthase, found in Xanthomonas axonopodis pv. citri (strain 306).